Here is a 617-residue protein sequence, read N- to C-terminus: Dihydroxy-acid dehydratase (617 aa).

Asp-81 serves as a coordination point for Mg(2+). Cys-122 serves as a coordination point for [2Fe-2S] cluster. Residues Asp-123 and Lys-124 each contribute to the Mg(2+) site. The residue at position 124 (Lys-124) is an N6-carboxylysine. Cys-195 is a binding site for [2Fe-2S] cluster. Residue Glu-491 coordinates Mg(2+). Ser-517 functions as the Proton acceptor in the catalytic mechanism.

It belongs to the IlvD/Edd family. As to quaternary structure, homodimer. Requires [2Fe-2S] cluster as cofactor. The cofactor is Mg(2+).

The catalysed reaction is (2R)-2,3-dihydroxy-3-methylbutanoate = 3-methyl-2-oxobutanoate + H2O. It catalyses the reaction (2R,3R)-2,3-dihydroxy-3-methylpentanoate = (S)-3-methyl-2-oxopentanoate + H2O. The protein operates within amino-acid biosynthesis; L-isoleucine biosynthesis; L-isoleucine from 2-oxobutanoate: step 3/4. It functions in the pathway amino-acid biosynthesis; L-valine biosynthesis; L-valine from pyruvate: step 3/4. Its function is as follows. Functions in the biosynthesis of branched-chain amino acids. Catalyzes the dehydration of (2R,3R)-2,3-dihydroxy-3-methylpentanoate (2,3-dihydroxy-3-methylvalerate) into 2-oxo-3-methylpentanoate (2-oxo-3-methylvalerate) and of (2R)-2,3-dihydroxy-3-methylbutanoate (2,3-dihydroxyisovalerate) into 2-oxo-3-methylbutanoate (2-oxoisovalerate), the penultimate precursor to L-isoleucine and L-valine, respectively. The chain is Dihydroxy-acid dehydratase from Rhodospirillum rubrum (strain ATCC 11170 / ATH 1.1.1 / DSM 467 / LMG 4362 / NCIMB 8255 / S1).